We begin with the raw amino-acid sequence, 298 residues long: Aspartate carbamoyltransferase catalytic subunit (298 aa).

Carbamoyl phosphate is bound by residues Arg-53 and Thr-54. Position 81 (Lys-81) interacts with L-aspartate. Residues Arg-103, His-132, and Gln-135 each coordinate carbamoyl phosphate. Positions 166 and 218 each coordinate L-aspartate. Residues Gly-259 and Pro-260 each coordinate carbamoyl phosphate.

Belongs to the aspartate/ornithine carbamoyltransferase superfamily. ATCase family. In terms of assembly, heterododecamer (2C3:3R2) of six catalytic PyrB chains organized as two trimers (C3), and six regulatory PyrI chains organized as three dimers (R2).

It carries out the reaction carbamoyl phosphate + L-aspartate = N-carbamoyl-L-aspartate + phosphate + H(+). The protein operates within pyrimidine metabolism; UMP biosynthesis via de novo pathway; (S)-dihydroorotate from bicarbonate: step 2/3. Catalyzes the condensation of carbamoyl phosphate and aspartate to form carbamoyl aspartate and inorganic phosphate, the committed step in the de novo pyrimidine nucleotide biosynthesis pathway. In Anaplasma marginale (strain St. Maries), this protein is Aspartate carbamoyltransferase catalytic subunit.